The sequence spans 258 residues: Granzyme M (258 aa).

Residues 21–250 (IIGGREAVPH…YSSWIRKVIG (230 aa)) form the Peptidase S1 domain. Cysteine 46 and cysteine 62 are oxidised to a cystine. Residues histidine 61 and aspartate 107 each act as charge relay system in the active site. The tract at residues 122–141 (NVKPLALPRKPRDKPAEGSR) is disordered. Disulfide bonds link cysteine 142-cysteine 210, cysteine 173-cysteine 189, and cysteine 200-cysteine 226. Residue asparagine 174 is glycosylated (N-linked (GlcNAc...) asparagine). Serine 204 acts as the Charge relay system in catalysis. N-linked (GlcNAc...) asparagine glycosylation occurs at asparagine 225.

Belongs to the peptidase S1 family. Granzyme subfamily.

Its subcellular location is the secreted. It is found in the cytoplasmic granule. Its function is as follows. Cleaves peptide substrates after methionine, leucine, and norleucine. Physiological substrates include EZR, alpha-tubulins and the apoptosis inhibitor BIRC5/Survivin. Promotes caspase activation and subsequent apoptosis of target cells. The sequence is that of Granzyme M (Gzmm) from Rattus norvegicus (Rat).